We begin with the raw amino-acid sequence, 89 residues long: Small ribosomal subunit protein uS15 (89 aa).

This sequence belongs to the universal ribosomal protein uS15 family. As to quaternary structure, part of the 30S ribosomal subunit. Forms a bridge to the 50S subunit in the 70S ribosome, contacting the 23S rRNA.

Functionally, one of the primary rRNA binding proteins, it binds directly to 16S rRNA where it helps nucleate assembly of the platform of the 30S subunit by binding and bridging several RNA helices of the 16S rRNA. Forms an intersubunit bridge (bridge B4) with the 23S rRNA of the 50S subunit in the ribosome. This chain is Small ribosomal subunit protein uS15, found in Gloeothece citriformis (strain PCC 7424) (Cyanothece sp. (strain PCC 7424)).